Reading from the N-terminus, the 78-residue chain is Small ribosomal subunit protein bS18 (78 aa).

This sequence belongs to the bacterial ribosomal protein bS18 family. Part of the 30S ribosomal subunit. Forms a tight heterodimer with protein bS6.

In terms of biological role, binds as a heterodimer with protein bS6 to the central domain of the 16S rRNA, where it helps stabilize the platform of the 30S subunit. This chain is Small ribosomal subunit protein bS18, found in Levilactobacillus brevis (strain ATCC 367 / BCRC 12310 / CIP 105137 / JCM 1170 / LMG 11437 / NCIMB 947 / NCTC 947) (Lactobacillus brevis).